We begin with the raw amino-acid sequence, 118 residues long: Basic phospholipase A2 CM-II (118 aa).

7 cysteine pairs are disulfide-bonded: Cys-11-Cys-70, Cys-26-Cys-117, Cys-28-Cys-44, Cys-43-Cys-98, Cys-50-Cys-91, Cys-59-Cys-84, and Cys-77-Cys-89. Residues Tyr-27, Gly-29, and Gly-31 each coordinate Ca(2+). Residue His-47 is part of the active site. Asp-48 contacts Ca(2+). Asp-92 is a catalytic residue.

This sequence belongs to the phospholipase A2 family. Group I subfamily. D49 sub-subfamily. Ca(2+) is required as a cofactor. In terms of tissue distribution, expressed by the venom gland.

Its subcellular location is the secreted. It carries out the reaction a 1,2-diacyl-sn-glycero-3-phosphocholine + H2O = a 1-acyl-sn-glycero-3-phosphocholine + a fatty acid + H(+). Snake venom phospholipase A2 (PLA2) that causes myonecrosis when injected intramuscularly, causes neuromuscular blockade with a gradual contracture and a decreased sensitivity to ACh and KCl (in the chick biventer cervicis nerve-muscle preparation), abolishes twitches evoked by indirect stimulation earlier than those by direct stimulation (in the mouse phrenic nerve-diaphragm preparation), shows indirect hemolytic activity, and shows weak anticoagulant activity. PLA2 catalyzes the calcium-dependent hydrolysis of the 2-acyl groups in 3-sn-phosphoglycerides. This chain is Basic phospholipase A2 CM-II, found in Naja mossambica (Mozambique spitting cobra).